Reading from the N-terminus, the 1242-residue chain is DNA-directed RNA polymerase RPB2 homolog (1242 aa).

The C4-type zinc finger occupies 1180–1201; that stretch reads CRNCGEPAIYNASHPIYKCMNC.

It belongs to the RNA polymerase beta chain family. Part of the viral DNA-directed RNA polymerase that consists of 8 polII-like subunits (RPB1, RPB2, RPB3, RPB5, RPB6, RPB7, RPB9, RPB10), a capping enzyme and a termination factor.

Its subcellular location is the host cytoplasm. The protein localises to the virion. It carries out the reaction RNA(n) + a ribonucleoside 5'-triphosphate = RNA(n+1) + diphosphate. Functionally, catalytic component of the DNA-directed RNA polymerase (RNAP) that catalyzes the transcription in the cytoplasm of viral DNA into RNA using the four ribonucleoside triphosphates as substrates. Forms the polymerase active center together with RPB1. Part of the core element with the central large cleft, the clamp element that moves to open and close the cleft and the jaws that are thought to grab the incoming DNA template. The protein is DNA-directed RNA polymerase RPB2 homolog of Ornithodoros (relapsing fever ticks).